We begin with the raw amino-acid sequence, 89 residues long: MDTRLINIGFGNIVAAGRVVAIVSPESAPIKRIISDARERGQLIDATYGRRTRAVIITDSGHVILSAIQPETVANRFLTAKPGLSEETE.

The protein belongs to the RemA family.

The protein is Putative regulatory protein CYB_0055 of Synechococcus sp. (strain JA-2-3B'a(2-13)) (Cyanobacteria bacterium Yellowstone B-Prime).